The chain runs to 229 residues: Large ribosomal subunit protein uL1 (229 aa).

Belongs to the universal ribosomal protein uL1 family. As to quaternary structure, part of the 50S ribosomal subunit.

Its function is as follows. Binds directly to 23S rRNA. The L1 stalk is quite mobile in the ribosome, and is involved in E site tRNA release. Functionally, protein L1 is also a translational repressor protein, it controls the translation of the L11 operon by binding to its mRNA. This chain is Large ribosomal subunit protein uL1, found in Haemophilus influenzae (strain 86-028NP).